A 645-amino-acid polypeptide reads, in one-letter code: Protein hrpC2 (645 aa).

7 helical membrane passes run 18–34 (VAIAALVVAVIGLMILP), 43–59 (LLGINITLSVVLLMVTM), 108–124 (LVVGGNLVVGLVVFLII), 201–217 (IAGLVITMVNILAGIVV), 243–259 (VSQIASLLISVAAGVMI), 285–301 (ARALMAASVLLACFAFV), and 308–324 (LFLLLAAAVGAGGYTIW). Residues 334 to 354 (DQRKLPSASRKGAKGEAPHIR) form a disordered region.

It belongs to the FHIPEP (flagella/HR/invasion proteins export pore) family.

It localises to the cell inner membrane. Its function is as follows. Involved in the secretion of a proteinaceous elicitor of the hypersensitivity response in plants. This chain is Protein hrpC2 (hrpC2), found in Xanthomonas euvesicatoria.